The chain runs to 356 residues: Alanine racemase, catabolic (356 aa).

Catalysis depends on K35, which acts as the Proton acceptor; specific for D-alanine. K35 bears the N6-(pyridoxal phosphate)lysine mark. R130 lines the substrate pocket. Y253 functions as the Proton acceptor; specific for L-alanine in the catalytic mechanism. Residue M301 coordinates substrate.

It belongs to the alanine racemase family. The cofactor is pyridoxal 5'-phosphate.

It carries out the reaction L-alanine = D-alanine. Its function is as follows. Isomerizes L-alanine to D-alanine which is then oxidized to pyruvate by DadA. The chain is Alanine racemase, catabolic (dadX) from Escherichia coli (strain K12).